The chain runs to 217 residues: Eukaryotic translation initiation factor 4E (217 aa).

Positions 1–27 (MATVEPETTPTPNPPPTEEEKTESNQE) are disordered. Position 2 is an N-acetylalanine (alanine 2). Position 22 is a phosphothreonine (threonine 22). Positions 37–40 (HPLQ) are EIF4EBP1/2/3 binding. 56-57 (WQ) serves as a coordination point for mRNA. Positions 73–77 (WALYN) are EIF4EBP1/2/3 binding. Residue 102–103 (WE) participates in mRNA binding. The tract at residues 132-139 (ETVLCLIG) is EIF4EBP1/2/3 binding. MRNA contacts are provided by residues 157-162 (RAKGDK) and 205-207 (TKS). Serine 209 carries the phosphoserine; by PKC and MKNK2 modification.

It belongs to the eukaryotic initiation factor 4E family. EIF4F is a multi-subunit complex, the composition of which varies with external and internal environmental conditions. It is composed of at least EIF4A, EIF4E and EIF4G1/EIF4G3. EIF4E is also known to interact with other partners. Interacts with EIF4ENIF1/4E-T; promotes recruitment to P-bodies and import into the nucleus. Hypophosphorylated EIF4EBP1, EIF4EBP2 and EIF4EBP3 compete with EIF4G1/EIF4G3 to interact with EIF4E; insulin stimulated MAP-kinase (MAPK1 and MAPK3) phosphorylation of EIF4EBP1 causes dissociation of the complex allowing EIF4G1/EIF4G3 to bind and consequent initiation of translation. Interacts mutually exclusive with EIF4A1 or EIF4A2. Interacts with NGDN and PIWIL2. Component of the CYFIP1-EIF4E-FMR1 complex composed of CYFIP, EIF4E and FMR1. Interacts directly with CYFIP1. Interacts with CLOCK. Binds to MKNK2 in nucleus. Interacts with LIMD1, WTIP and AJUBA. Interacts with APOBEC3G in an RNA-dependent manner. Interacts with LARP1. Interacts with METTL3. Interacts with RBM24; this interaction prevents EIF4E from binding to p53/TP53 mRNA and inhibits the assembly of translation initiation complex. Interacts with DDX3X; interaction is direct and in an RNA-independent manner; this interaction enhances EIF4E cap-binding ability and is required for the repression of cap-dependent translation and the increase of IRES-mediated translation. DDX3X competes with EIF4G1 for interaction with EIF4E. Interacts with EIF4G1; which in a mutual exclusive interaction associates either with EIF1 or with EIF4E on a common binding site. Interacts with BTG4 and CNOT7. Interacts with LRPPRC (via N-terminus); the interaction promotes association of EIF4E with 4ESE-containing mRNAs. Interacts with mRNA cleavage enzyme CPSF3 and its cofactor CPSF1. Interacts (via RING-type zinc finger) with PML; the interaction results in conformational changes of both interacting proteins and reduces EIF4E affinity for the 5' m7G cap of mRNA, thus reducing EIF4E-mediated mRNA nuclear export. Interacts with homeobox protein HHEX/PRH; the interaction inhibits EIF4E-mediated mRNA nuclear export. Interacts with homeobox protein HOXA9; the interaction positively regulates EIF4E-mediated mRNA nuclear export. Interacts with homeobox protein EMX2. Post-translationally, phosphorylation increases the ability of the protein to bind to mRNA caps and to form the eIF4F complex. Phosphorylation also enhances its mRNA transport function. Phosphorylation at Ser-209 is not essential for protein synthesis.

The protein resides in the cytoplasm. The protein localises to the P-body. Its subcellular location is the stress granule. It is found in the nucleus. It localises to the nucleus speckle. The protein resides in the nuclear body. Acts in the cytoplasm to initiate and regulate protein synthesis and is required in the nucleus for export of a subset of mRNAs from the nucleus to the cytoplasm which promotes processes such as RNA capping, processing and splicing. Component of the protein complex eIF4F, which is involved in the recognition of the mRNA cap, ATP-dependent unwinding of 5'-terminal secondary structure and recruitment of mRNA to the ribosome. This protein recognizes and binds the 7-methylguanosine (m7G)-containing mRNA cap during an early step in the initiation of protein synthesis and facilitates ribosome binding by inducing the unwinding of the mRNAs secondary structures. Together with EIF4G1, antagonizes the scanning promoted by EIF1-EIF4G1 and is required for TISU translation, a process where the TISU element recognition makes scanning unnecessary. In addition to its role in translation initiation, also acts as a regulator of translation and stability in the cytoplasm. Component of the CYFIP1-EIF4E-FMR1 complex which binds to the mRNA cap and mediates translational repression: in the complex, EIF4E mediates the binding to the mRNA cap. Component of a multiprotein complex that sequesters and represses translation of proneurogenic factors during neurogenesis. In P-bodies, component of a complex that mediates the storage of translationally inactive mRNAs in the cytoplasm and prevents their degradation. May play an important role in spermatogenesis through translational regulation of stage-specific mRNAs during germ cell development. As well as its roles in translation, also involved in mRNA nucleocytoplasmic transport. Its role in mRNA export from the nucleus to the cytoplasm relies on its ability to bind the m7G cap of RNAs and on the presence of the 50-nucleotide EIF4E sensitivity element (4ESE) in the 3'UTR of sensitive transcripts. Interaction with the 4ESE is mediated by LRPPRC which binds simultaneously to both EIF4E and the 4ESE, thereby acting as a platform for assembly for the RNA export complex. EIF4E-dependent mRNA export is independent of ongoing protein or RNA synthesis and is also NFX1-independent but is XPO1-dependent with LRPPRC interacting with XPO1 to form an EIF4E-dependent mRNA export complex. Alters the composition of the cytoplasmic face of the nuclear pore to promote RNA export by reducing RANBP2 expression, relocalizing nucleoporin NUP214 and increasing expression of RANBP1 and RNA export factors DDX19 and GLE1. Promotes the nuclear export of cyclin CCND1 mRNA. Promotes the nuclear export of NOS2/iNOS mRNA. Promotes the nuclear export of MDM2 mRNA. Also promotes the export of additional mRNAs, including others involved in the cell cycle. In the nucleus, binds to capped splice factor-encoding mRNAs and stimulates their nuclear export to enhance splice factor production by increasing their cytoplasmic availability to the translation machinery. May also regulate splicing through interaction with the spliceosome in an RNA and m7G cap-dependent manner. Also binds to some pre-mRNAs and may play a role in their recruitment to the spliceosome. Promotes steady-state capping of a subset of coding and non-coding RNAs by mediating nuclear export of capping machinery mRNAs including RNMT, RNGTT and RAMAC to enhance their translation. Stimulates mRNA 3'-end processing by promoting the expression of several core cleavage complex factors required for mRNA cleavage and polyadenylation, and may also have a direct effect through its interaction with the CPSF3 cleavage enzyme. Rescues cells from apoptosis by promoting activation of serine/threonine-protein kinase AKT1 through mRNA export of NBS1 which potentiates AKT1 phosphorylation and also through mRNA export of AKT1 effectors, allowing for increased production of these proteins. This chain is Eukaryotic translation initiation factor 4E (EIF4E), found in Bos taurus (Bovine).